The following is a 1485-amino-acid chain: Chromosome partition protein MukB (1485 aa).

34-41 (GGNGAGKS) provides a ligand contact to ATP. 6 coiled-coil regions span residues 337–480 (LNLV…QAYQ), 509–605 (QHLA…PVWL), 780–805 (RAAR…ATLS), 835–915 (EAEI…IQQH), 977–1116 (GMLT…AKAG), and 1210–1235 (EAIE…KLAI). A flexible hinge region spans residues 666–783 (PSGAEDARLI…EVPLFGRAAR (118 aa)).

Belongs to the SMC family. MukB subfamily. As to quaternary structure, homodimerization via its hinge domain. Binds to DNA via its C-terminal region. Interacts, and probably forms a ternary complex, with MukE and MukF via its C-terminal region. The complex formation is stimulated by calcium or magnesium. Interacts with tubulin-related protein FtsZ.

It is found in the cytoplasm. It localises to the nucleoid. Its function is as follows. Plays a central role in chromosome condensation, segregation and cell cycle progression. Functions as a homodimer, which is essential for chromosome partition. Involved in negative DNA supercoiling in vivo, and by this means organize and compact chromosomes. May achieve or facilitate chromosome segregation by condensation DNA from both sides of a centrally located replisome during cell division. This is Chromosome partition protein MukB from Yersinia pseudotuberculosis serotype O:1b (strain IP 31758).